A 357-amino-acid polypeptide reads, in one-letter code: Protein RecA (357 aa).

71 to 78 (GPESSGKT) is a binding site for ATP.

This sequence belongs to the RecA family.

It localises to the cytoplasm. In terms of biological role, can catalyze the hydrolysis of ATP in the presence of single-stranded DNA, the ATP-dependent uptake of single-stranded DNA by duplex DNA, and the ATP-dependent hybridization of homologous single-stranded DNAs. It interacts with LexA causing its activation and leading to its autocatalytic cleavage. The sequence is that of Protein RecA from Ehrlichia ruminantium (strain Gardel).